A 331-amino-acid chain; its full sequence is Pectate lyase B (331 aa).

An N-terminal signal peptide occupies residues 1–25 (MKFTGSPLLWPSWLPLPAPPPPLPS). The N-linked (GlcNAc...) asparagine glycan is linked to N99. Ca(2+) contacts are provided by D139, D169, and D173. R226 is a catalytic residue.

The protein belongs to the polysaccharide lyase 1 family. The cofactor is Ca(2+).

The protein localises to the secreted. It catalyses the reaction Eliminative cleavage of (1-&gt;4)-alpha-D-galacturonan to give oligosaccharides with 4-deoxy-alpha-D-galact-4-enuronosyl groups at their non-reducing ends.. Its pathway is glycan metabolism; pectin degradation; 2-dehydro-3-deoxy-D-gluconate from pectin: step 2/5. Its function is as follows. Acts as a virulence factor active in plant tissue maceration. In Colletotrichum gloeosporioides (Anthracnose fungus), this protein is Pectate lyase B (PLB).